The sequence spans 321 residues: AA9 family lytic polysaccharide monooxygenase D (321 aa).

An N-terminal signal peptide occupies residues 1–21 (MRSTIVATFAAGLVVASLVAA). Histidine 22 lines the Cu(2+) pocket. Cystine bridges form between cysteine 75–cysteine 192 and cysteine 116–cysteine 120. A glycan (N-linked (GlcNAc...) asparagine) is linked at asparagine 78. Histidine 105 contributes to the Cu(2+) binding site. Residue asparagine 152 is glycosylated (N-linked (GlcNAc...) asparagine). Histidine 178 and glutamine 187 together coordinate O2. Residue tyrosine 189 participates in Cu(2+) binding. An N-linked (GlcNAc...) asparagine glycan is attached at asparagine 266.

It belongs to the polysaccharide monooxygenase AA9 family. Requires Cu(2+) as cofactor.

The protein resides in the secreted. The catalysed reaction is [(1-&gt;4)-beta-D-glucosyl]n+m + reduced acceptor + O2 = 4-dehydro-beta-D-glucosyl-[(1-&gt;4)-beta-D-glucosyl]n-1 + [(1-&gt;4)-beta-D-glucosyl]m + acceptor + H2O.. Functionally, lytic polysaccharide monooxygenase (LPMO) that depolymerizes crystalline and amorphous polysaccharides via the oxidation of scissile alpha- or beta-(1-4)-glycosidic bonds, yielding C1 or C4 oxidation products. Catalysis by LPMOs requires the reduction of the active-site copper from Cu(II) to Cu(I) by a reducing agent and H(2)O(2) or O(2) as a cosubstrate. The chain is AA9 family lytic polysaccharide monooxygenase D from Geotrichum candidum (Oospora lactis).